We begin with the raw amino-acid sequence, 294 residues long: ATP phosphoribosyltransferase (294 aa).

It belongs to the ATP phosphoribosyltransferase family. Long subfamily. Requires Mg(2+) as cofactor.

It localises to the cytoplasm. It carries out the reaction 1-(5-phospho-beta-D-ribosyl)-ATP + diphosphate = 5-phospho-alpha-D-ribose 1-diphosphate + ATP. It functions in the pathway amino-acid biosynthesis; L-histidine biosynthesis; L-histidine from 5-phospho-alpha-D-ribose 1-diphosphate: step 1/9. Feedback inhibited by histidine. In terms of biological role, catalyzes the condensation of ATP and 5-phosphoribose 1-diphosphate to form N'-(5'-phosphoribosyl)-ATP (PR-ATP). Has a crucial role in the pathway because the rate of histidine biosynthesis seems to be controlled primarily by regulation of HisG enzymatic activity. The polypeptide is ATP phosphoribosyltransferase (Chlorobium luteolum (strain DSM 273 / BCRC 81028 / 2530) (Pelodictyon luteolum)).